Consider the following 266-residue polypeptide: Undecaprenyl-diphosphatase (266 aa).

8 helical membrane-spanning segments follow: residues 1–21 (MDTFQVIILALIQGLTEFLPI), 39–59 (QGLSFDVAVNTGSLLAVVIYF), 87–107 (WWIILATLPAVFFGFMAKDFI), 111–131 (LRSAEVIAVTTIVFGLLLWWA), 149–169 (ALLIGFAQALALIPGTSRSGA), 183–203 (AAARFSFLMSVPVSLGAAILV), 218–238 (ALTLGTLVSFVAAYLCIHYFL), and 246–266 (MTPFVIYRLILGAVLCGFIFL).

This sequence belongs to the UppP family.

It localises to the cell inner membrane. The enzyme catalyses di-trans,octa-cis-undecaprenyl diphosphate + H2O = di-trans,octa-cis-undecaprenyl phosphate + phosphate + H(+). In terms of biological role, catalyzes the dephosphorylation of undecaprenyl diphosphate (UPP). Confers resistance to bacitracin. The chain is Undecaprenyl-diphosphatase from Shewanella putrefaciens (strain CN-32 / ATCC BAA-453).